We begin with the raw amino-acid sequence, 125 residues long: uncharacterized protein (125 aa).

The next 2 helical transmembrane spans lie at 28 to 48 (VFITHLFFLLHSLLLFLSQFC) and 54 to 74 (FFLPTINLVTHSIKFITLFFF).

The protein localises to the membrane. This is an uncharacterized protein from Saccharomyces cerevisiae (strain ATCC 204508 / S288c) (Baker's yeast).